The chain runs to 89 residues: Snake venom serine protease rhinocerase (89 aa).

A Peptidase S1 domain is found at Val1–Lys89. Catalysis depends on Asp45, which acts as the Charge relay system. Cys64 and Cys69 are disulfide-bonded.

This sequence belongs to the peptidase S1 family. Snake venom subfamily. In terms of processing, glycosylated. In terms of tissue distribution, expressed by the venom gland.

The protein resides in the secreted. With respect to regulation, inhibited by PMSF. Not inhibited by benzamidine. In terms of biological role, snake venom serine protease that cleaves fibrinogen alpha and beta chains (FGA and FGB), but not gamma chains. Exhibits fibrinolytic and kininogenolytic. Preferentially cleaves after Arg and Lys residues. The polypeptide is Snake venom serine protease rhinocerase (Bitis rhinoceros (West African gaboon viper)).